We begin with the raw amino-acid sequence, 124 residues long: Ribonuclease pancreatic (124 aa).

Residues 1 to 13 (KETAAAKFERQHM) are compositionally biased toward basic and acidic residues. Positions 1 to 25 (KETAAAKFERQHMDSSTSSASSSNY) are disordered. Substrate contacts are provided by Lys7 and Arg10. Catalysis depends on His12, which acts as the Proton acceptor. Cystine bridges form between Cys26/Cys84, Cys40/Cys95, Cys58/Cys110, and Cys65/Cys72. Residues 41 to 45 (KPVNT), Lys66, and Arg85 each bind substrate. His119 (proton donor) is an active-site residue.

It belongs to the pancreatic ribonuclease family. In terms of assembly, monomer. Interacts with and forms tight 1:1 complexes with RNH1. Dimerization of two such complexes may occur. Interaction with RNH1 inhibits this protein. Pancreas.

The protein resides in the secreted. The catalysed reaction is an [RNA] containing cytidine + H2O = an [RNA]-3'-cytidine-3'-phosphate + a 5'-hydroxy-ribonucleotide-3'-[RNA].. It catalyses the reaction an [RNA] containing uridine + H2O = an [RNA]-3'-uridine-3'-phosphate + a 5'-hydroxy-ribonucleotide-3'-[RNA].. In terms of biological role, endonuclease that catalyzes the cleavage of RNA on the 3' side of pyrimidine nucleotides. Acts on single-stranded and double-stranded RNA. The protein is Ribonuclease pancreatic (RNASE1) of Tragelaphus oryx (Eland).